We begin with the raw amino-acid sequence, 199 residues long: Recombination protein RecR (199 aa).

A C4-type zinc finger spans residues 57-72 (CAECRTFTEEEVCHIC). A Toprim domain is found at 81-176 (GQICVVESPA…EASRIAHGVP (96 aa)).

It belongs to the RecR family.

Functionally, may play a role in DNA repair. It seems to be involved in an RecBC-independent recombinational process of DNA repair. It may act with RecF and RecO. In Vibrio parahaemolyticus serotype O3:K6 (strain RIMD 2210633), this protein is Recombination protein RecR.